The primary structure comprises 202 residues: IMP cyclohydrolase (202 aa).

Belongs to the archaeal IMP cyclohydrolase family.

The enzyme catalyses IMP + H2O = 5-formamido-1-(5-phospho-D-ribosyl)imidazole-4-carboxamide. The protein operates within purine metabolism; IMP biosynthesis via de novo pathway; IMP from 5-formamido-1-(5-phospho-D-ribosyl)imidazole-4-carboxamide: step 1/1. In terms of biological role, catalyzes the cyclization of 5-formylamidoimidazole-4-carboxamide ribonucleotide to IMP. The protein is IMP cyclohydrolase of Methanothermobacter thermautotrophicus (strain ATCC 29096 / DSM 1053 / JCM 10044 / NBRC 100330 / Delta H) (Methanobacterium thermoautotrophicum).